Here is a 355-residue protein sequence, read N- to C-terminus: tRNA-specific 2-thiouridylase MnmA (355 aa).

ATP is bound by residues 6–13 (LLSGGVDS) and leucine 33. Cysteine 100 serves as the catalytic Nucleophile. A disulfide bridge connects residues cysteine 100 and cysteine 195. Glycine 123 serves as a coordination point for ATP. Positions 145-147 (KDQ) are interaction with tRNA. The active-site Cysteine persulfide intermediate is the cysteine 195.

It belongs to the MnmA/TRMU family.

The protein resides in the cytoplasm. The catalysed reaction is S-sulfanyl-L-cysteinyl-[protein] + uridine(34) in tRNA + AH2 + ATP = 2-thiouridine(34) in tRNA + L-cysteinyl-[protein] + A + AMP + diphosphate + H(+). In terms of biological role, catalyzes the 2-thiolation of uridine at the wobble position (U34) of tRNA, leading to the formation of s(2)U34. The protein is tRNA-specific 2-thiouridylase MnmA of Borrelia garinii subsp. bavariensis (strain ATCC BAA-2496 / DSM 23469 / PBi) (Borreliella bavariensis).